Here is a 335-residue protein sequence, read N- to C-terminus: Tetraacyldisaccharide 4'-kinase (335 aa).

59-66 contributes to the ATP binding site; the sequence is TAGGNGKT.

It belongs to the LpxK family.

It catalyses the reaction a lipid A disaccharide + ATP = a lipid IVA + ADP + H(+). Its pathway is glycolipid biosynthesis; lipid IV(A) biosynthesis; lipid IV(A) from (3R)-3-hydroxytetradecanoyl-[acyl-carrier-protein] and UDP-N-acetyl-alpha-D-glucosamine: step 6/6. Functionally, transfers the gamma-phosphate of ATP to the 4'-position of a tetraacyldisaccharide 1-phosphate intermediate (termed DS-1-P) to form tetraacyldisaccharide 1,4'-bis-phosphate (lipid IVA). In Vibrio parahaemolyticus serotype O3:K6 (strain RIMD 2210633), this protein is Tetraacyldisaccharide 4'-kinase.